Here is a 283-residue protein sequence, read N- to C-terminus: Polyamine aminopropyltransferase (283 aa).

The PABS domain occupies 5–238 (TTWIDEYHKG…GIWSWTFASS (234 aa)). Glutamine 32 contributes to the S-methyl-5'-thioadenosine binding site. Spermidine contacts are provided by histidine 63 and aspartate 87. Residues glutamate 107 and 139 to 140 (DG) contribute to the S-methyl-5'-thioadenosine site. Catalysis depends on aspartate 158, which acts as the Proton acceptor. 158–161 (DCSD) contacts spermidine.

This sequence belongs to the spermidine/spermine synthase family. In terms of assembly, homodimer or homotetramer.

The protein localises to the cytoplasm. The enzyme catalyses S-adenosyl 3-(methylsulfanyl)propylamine + putrescine = S-methyl-5'-thioadenosine + spermidine + H(+). The protein operates within amine and polyamine biosynthesis; spermidine biosynthesis; spermidine from putrescine: step 1/1. Its function is as follows. Catalyzes the irreversible transfer of a propylamine group from the amino donor S-adenosylmethioninamine (decarboxy-AdoMet) to putrescine (1,4-diaminobutane) to yield spermidine. This Prochlorococcus marinus (strain AS9601) protein is Polyamine aminopropyltransferase.